The chain runs to 748 residues: MEALSINAPTQASTLPSGLQISKEVEKRYNVVRSVGEQCIHDDELKDLLAKKAAPVCYDGFEPSGRMHIAQGLMKIMNVNKLTSAGCRVKIWIADWFAYMNNKLGGDLKKIRVVGEYFKEIFQAAGMNSENVEFLWSSDEINAKGDEYWPLVMDIACRNSLAQIKRCMPIMGLSENEELSAAHILYVCMQCADTFFLEADICQLGMDQQTVNLLARDYCDVVKRENKPVILSHHMLPGLQQGQKKMSKSDPSSAIFMEDEEAEVNVKIKKAYCPPDIVEGNPCLEYVKHIILPWFSEFTVERDEKYGGNRTFKSFEDITTDYESGQLHPKDLKDALSKALNKILQPVRDHFKTNSRAKNLLKQVKGYKVTRVIPTASSTKEEDLSINTSASSSAAGLQMSEEAEMKYKIVRSIGEECIQEDELKNLLAKKPAPICYDGFEPSGRMHIAQGVMKVTNVNKLTSAGCQVKIWIADWFAQLNNKLGGDLERIRVVGEYFKEIWQAGGMNNDKVEFLWASDEINGKGSKYWPLVMDIARRNNLRRILRCGQIMGRSETEVLSAAQILYPCMQCADIFLLEADICQLGMDQRKVNMLAREYCADIKRKNKPIILSHHMLPGLQQGQEKMSKSDPSSAIFMEDEEADVNEKISKAYCPPKTVEGNPCLEYVKYIVLPRFNEFKVESEKNGGNKTFNSFEDIVADYETGELHPEDLKKALMKALNITLQPVRDHFKTNERAKNLLEQVKAFRVTR.

An N-acetylmethionine modification is found at methionine 1. Positions 441 to 449 match the 'HIGH' region motif; sequence PSGRMHIAQ. The L-tyrosine site is built by tyrosine 564, glutamine 568, aspartate 571, and glutamine 586. The 'KMSKS' region signature appears at 623–627; the sequence is KMSKS. Lysine 626 serves as a coordination point for ATP.

The protein belongs to the class-I aminoacyl-tRNA synthetase family.

The protein localises to the cytoplasm. It localises to the cytosol. The catalysed reaction is tRNA(Tyr) + L-tyrosine + ATP = L-tyrosyl-tRNA(Tyr) + AMP + diphosphate + H(+). Its function is as follows. Catalyzes the attachment of tyrosine to tRNA(Tyr) in a two-step reaction: tyrosine is first activated by ATP to form Tyr-AMP and then transferred to the acceptor end of tRNA(Tyr). This is Tyrosine--tRNA ligase 2, cytoplasmic from Arabidopsis thaliana (Mouse-ear cress).